A 235-amino-acid polypeptide reads, in one-letter code: MAKRSKAYEAAAAKIDAEKSYAPFEAVTLAKDTNPSKFDATIEVAFRLGVDPRKADQMVRGTVNLPHGTGKTARVLVFATGDKAEAAIAAGADFVGSDDLIEKIAGGWTDFDAAVATPDLMGKVGRLGKVLGPRNLMPNPKTGTVTPDVTKAVNDIKGGKIDFRVDKHSNLHFIIGKVSFDAVKLAENYAAALEEVLRLKPSASKGRYIQKATVATTFGPGISVDPNVTKVLTEA.

It belongs to the universal ribosomal protein uL1 family. In terms of assembly, part of the 50S ribosomal subunit.

Its function is as follows. Binds directly to 23S rRNA. The L1 stalk is quite mobile in the ribosome, and is involved in E site tRNA release. Protein L1 is also a translational repressor protein, it controls the translation of the L11 operon by binding to its mRNA. The sequence is that of Large ribosomal subunit protein uL1 from Pseudarthrobacter chlorophenolicus (strain ATCC 700700 / DSM 12829 / CIP 107037 / JCM 12360 / KCTC 9906 / NCIMB 13794 / A6) (Arthrobacter chlorophenolicus).